A 239-amino-acid chain; its full sequence is LexA repressor (239 aa).

A DNA-binding region (H-T-H motif) is located at residues Phe-26 to Thr-46. The tract at residues Ser-84–Val-107 is disordered. Residues Ser-159 and Lys-197 each act as for autocatalytic cleavage activity in the active site.

Belongs to the peptidase S24 family. In terms of assembly, homodimer.

The enzyme catalyses Hydrolysis of Ala-|-Gly bond in repressor LexA.. Represses a number of genes involved in the response to DNA damage (SOS response), including recA and lexA. In the presence of single-stranded DNA, RecA interacts with LexA causing an autocatalytic cleavage which disrupts the DNA-binding part of LexA, leading to derepression of the SOS regulon and eventually DNA repair. This chain is LexA repressor, found in Rhizobium johnstonii (strain DSM 114642 / LMG 32736 / 3841) (Rhizobium leguminosarum bv. viciae).